Here is a 316-residue protein sequence, read N- to C-terminus: HPr kinase/phosphorylase (316 aa).

Active-site residues include H146 and K167. 161 to 168 (GESGLGKS) is a binding site for ATP. Mg(2+) is bound at residue S168. D185 (proton acceptor; for phosphorylation activity. Proton donor; for dephosphorylation activity) is an active-site residue. The interval 209–218 (LEVRGIGLLD) is important for the catalytic mechanism of both phosphorylation and dephosphorylation. Mg(2+) is bound at residue E210. The active site involves R252. Residues 273–278 (QVEAGR) form an important for the catalytic mechanism of dephosphorylation region.

The protein belongs to the HPrK/P family. Homohexamer. Mg(2+) is required as a cofactor.

It catalyses the reaction [HPr protein]-L-serine + ATP = [HPr protein]-O-phospho-L-serine + ADP + H(+). The catalysed reaction is [HPr protein]-O-phospho-L-serine + phosphate + H(+) = [HPr protein]-L-serine + diphosphate. Functionally, catalyzes the ATP- as well as the pyrophosphate-dependent phosphorylation of a specific serine residue in HPr, a phosphocarrier protein of the phosphoenolpyruvate-dependent sugar phosphotransferase system (PTS). HprK/P also catalyzes the pyrophosphate-producing, inorganic phosphate-dependent dephosphorylation (phosphorolysis) of seryl-phosphorylated HPr (P-Ser-HPr). This is HPr kinase/phosphorylase from Polaromonas sp. (strain JS666 / ATCC BAA-500).